The chain runs to 41 residues: Photosystem II reaction center protein X (41 aa).

The Lumenal portion of the chain corresponds to 2 to 6 (TITPS). A helical membrane pass occupies residues 7–29 (LKGFFIGLLSGAVVLGLTFAVLI). Over 30–41 (AISQIDKVQRSL) the chain is Cytoplasmic.

Belongs to the PsbX family. Type 1 subfamily. In terms of assembly, PSII is composed of 1 copy each of membrane proteins PsbA, PsbB, PsbC, PsbD, PsbE, PsbF, PsbH, PsbI, PsbJ, PsbK, PsbL, PsbM, PsbT, PsbX, PsbY, PsbZ, Psb30/Ycf12, peripheral proteins PsbO, CyanoQ (PsbQ), PsbU, PsbV and a large number of cofactors. It forms dimeric complexes. Part of a photosystem II (PSII) assembly intermediate complex PSII-I; crystallized from a strain deleted of psbJ, it forms monomeric PSII before addition of the oxygen evolving complex. PSII-I includes 3 assembly factors not found in mature PSII (Psb27, Psb28 and Psb34). PSII binds multiple chlorophylls, carotenoids and specific lipids. is required as a cofactor.

The protein localises to the cellular thylakoid membrane. Its function is as follows. Involved in the binding and/or turnover of quinones at the Q(B) site of photosystem II (PSII). PSII is a light-driven water plastoquinone oxidoreductase, using light energy to abstract electrons from H(2)O, generating a proton gradient subsequently used for ATP formation. In Thermosynechococcus vestitus (strain NIES-2133 / IAM M-273 / BP-1), this protein is Photosystem II reaction center protein X.